Here is a 343-residue protein sequence, read N- to C-terminus: Methionine import ATP-binding protein MetN 2 (343 aa).

In terms of domain architecture, ABC transporter spans 2 to 241; that stretch reads IEFKDVTKTF…PQQAVTKRFV (240 aa). Position 38 to 45 (38 to 45) interacts with ATP; the sequence is GYSGAGKS.

It belongs to the ABC transporter superfamily. Methionine importer (TC 3.A.1.24) family. In terms of assembly, the complex is composed of two ATP-binding proteins (MetN), two transmembrane proteins (MetI) and a solute-binding protein (MetQ).

Its subcellular location is the cell membrane. The catalysed reaction is L-methionine(out) + ATP + H2O = L-methionine(in) + ADP + phosphate + H(+). It carries out the reaction D-methionine(out) + ATP + H2O = D-methionine(in) + ADP + phosphate + H(+). In terms of biological role, part of the ABC transporter complex MetNIQ involved in methionine import. Responsible for energy coupling to the transport system. This is Methionine import ATP-binding protein MetN 2 from Lactiplantibacillus plantarum (strain ATCC BAA-793 / NCIMB 8826 / WCFS1) (Lactobacillus plantarum).